We begin with the raw amino-acid sequence, 658 residues long: MEGDASDPEPPDAGEDSKSENGENAPIYCICRKPDINCFMIGCDNCNEWFHGDCIRITEKMAKAIREWYCRECREKDPKLEIRYRHKKSRERDSSERDGSEPRDEGGGRKRPAPDPDLQRRAGAGTGVGAMLARGSASPHKSSPQPLVATPSQHHQQQQQQQQIKRSARMCGECEACRRTEDCGHCDFCRDMKKFGGPNKIRQKCRLRQCQLRARESYKYFPSSLSPVTPSESLPRPRRPLPTQPQPQPSQKLGRLREDEGAVASAAVKEPPEATATPEPLSDEDLPLDSELYQDFCAGAFDDHSLPWMSDTEESQFLDPALRKRAVKVKHVKRREKKSEKKKDERYKRHRQKQKHKDKWKHPERADAKDPASLPQCLGPGCVRAAQPGSKYCSDDCGMKLAANRIYEILPQRIQQWQQSPCIAEEHGKKLLERIRREQQSARTRLQEMERRFHELEAIILRAKQQAVREDEESNEGDSDDTDLQIFCVSCGHPINPRVALRHMERCYAKYESQTSFGSMYPTRIEGATRLFCDVYNPQSKTYCKRLQVLCPEHSRDPKVPADEVCGCPLVRDVFELTGDFCRLPKRQCNRHYCWEKLRRAEVDLERVRVWYKLDELFEQERNVRTAMTNRAGLLALMLHQTIQHDPLTTDLRSNAER.

Met-1 carries the post-translational modification N-acetylmethionine. Positions 1–14 (MEGDASDPEPPDAG) are enriched in acidic residues. The tract at residues 1-20 (MEGDASDPEPPDAGEDSKSE) is disordered. A phosphoserine mark is found at Ser-6 and Ser-19. Residues 28–76 (YCICRKPDINCFMIGCDNCNEWFHGDCIRITEKMAKAIREWYCRECREK) form a PHD-type zinc finger. Residues 84-164 (YRHKKSRERD…HQQQQQQQQI (81 aa)) are disordered. Basic and acidic residues predominate over residues 90–120 (RERDSSERDGSEPRDEGGGRKRPAPDPDLQR). A compositionally biased stretch (low complexity) spans 153-163 (QHHQQQQQQQQ). A CXXC-type zinc finger spans residues 162–211 (QQIKRSARMCGECEACRRTEDCGHCDFCRDMKKFGGPNKIRQKCRLRQCQ). Zn(2+) is bound by residues Cys-171, Cys-174, Cys-177, Cys-183, Cys-186, Cys-189, Cys-205, and Cys-210. Disordered regions lie at residues 221-285 (FPSS…SDED) and 327-373 (VKVK…DPAS). Ser-226 carries the post-translational modification Phosphoserine. At Thr-229 the chain carries Phosphothreonine. Residue Lys-252 forms a Glycyl lysine isopeptide (Lys-Gly) (interchain with G-Cter in SUMO2) linkage. The span at 327–336 (VKVKHVKRRE) shows a compositional bias: basic residues. Residues 337 to 347 (KKSEKKKDERY) are compositionally biased toward basic and acidic residues. A compositionally biased stretch (basic residues) spans 348–360 (KRHRQKQKHKDKW). The segment covering 361–370 (KHPERADAKD) has biased composition (basic and acidic residues). Residues 428-470 (GKKLLERIRREQQSARTRLQEMERRFHELEAIILRAKQQAVRE) adopt a coiled-coil conformation.

As to quaternary structure, component of the SET1 complex, at least composed of the catalytic subunit (SETD1A or SETD1B), WDR5, WDR82, RBBP5, ASH2L/ASH2, CXXC1/CFP1, HCFC1 and DPY30. Interacts with SETD1A. Interacts with ZNF335. Interacts with PRDM9; this interaction does not link PRDM9-activated recombination hotspot sites with DSB machinery and is not required for the hotspot recognition pathway. Interacts with histone H3K4me3. In terms of processing, may be regulated by proteolysis.

The protein resides in the nucleus speckle. It localises to the nucleus. Its function is as follows. Transcriptional activator that exhibits a unique DNA binding specificity for CpG unmethylated motifs with a preference for CpGG. The protein is CXXC-type zinc finger protein 1 (CXXC1) of Bos taurus (Bovine).